The following is a 328-amino-acid chain: DNA-directed RNA polymerase subunit alpha (328 aa).

Residues 1-235 (MQGSVTEFLK…EQLDAFVDLR (235 aa)) are alpha N-terminal domain (alpha-NTD). The alpha C-terminal domain (alpha-CTD) stretch occupies residues 249–328 (FDPILLRPVD…ENWPPASLAE (80 aa)).

This sequence belongs to the RNA polymerase alpha chain family. In terms of assembly, homodimer. The RNAP catalytic core consists of 2 alpha, 1 beta, 1 beta' and 1 omega subunit. When a sigma factor is associated with the core the holoenzyme is formed, which can initiate transcription.

It catalyses the reaction RNA(n) + a ribonucleoside 5'-triphosphate = RNA(n+1) + diphosphate. Its function is as follows. DNA-dependent RNA polymerase catalyzes the transcription of DNA into RNA using the four ribonucleoside triphosphates as substrates. The polypeptide is DNA-directed RNA polymerase subunit alpha (Pseudoalteromonas translucida (strain TAC 125)).